The primary structure comprises 228 residues: Sodium channel regulatory subunit beta-4 (228 aa).

The signal sequence occupies residues 1 to 30 (MPGAGDGGKAPARWLGTGLLGLFLLPVTLS). The region spanning 31–148 (LEVSVGKATD…NNLQHHATIF (118 aa)) is the Ig-like C2-type domain. The Extracellular segment spans residues 31 to 162 (LEVSVGKATD…DRLEEVDNTV (132 aa)). Residues N45, N71, and N113 are each glycosylated (N-linked (GlcNAc...) asparagine). A disulfide bridge links C53 with C131. The chain crosses the membrane as a helical span at residues 163 to 183 (TLIILAVVGGVIGLLILILLI). The Cytoplasmic portion of the chain corresponds to 184–228 (KKLIIFILKKTREKKKECLVSSSGNDNTENGLPGSKAEEKPPSKV). Positions 200–228 (ECLVSSSGNDNTENGLPGSKAEEKPPSKV) are disordered. Positions 203-213 (VSSSGNDNTEN) are enriched in polar residues. Residues 219-228 (KAEEKPPSKV) show a composition bias toward basic and acidic residues.

It belongs to the sodium channel auxiliary subunit SCN4B (TC 8.A.17) family. A voltage-gated sodium (Nav) channel consists of an ion-conducting pore-forming alpha subunit functional on its own that is regulated by one or more beta subunits. The beta subunit SCN4B is disulfide-linked to the pore-forming alpha subunit. Interacts with SCN1A; regulatory subunit of SCN1A/Nav1.1. Interacts with SCN2A; regulatory subunit of SCN2A/Nav1.2. Contains an interchain disulfide bond with SCN2A. In terms of processing, N-glycosylated. In terms of tissue distribution, expressed at a high level in dorsal root ganglia, at a lower level in brain, spinal cord, skeletal muscle and heart. Expressed in the atrium.

Its subcellular location is the cell membrane. In terms of biological role, regulatory subunit of multiple voltage-gated sodium (Nav) channels directly mediating the depolarization of excitable membranes. Navs, also called VGSCs (voltage-gated sodium channels) or VDSCs (voltage-dependent sodium channels), operate by switching between closed and open conformations depending on the voltage difference across the membrane. In the open conformation they allow Na(+) ions to selectively pass through the pore, along their electrochemical gradient. The influx of Na+ ions provokes membrane depolarization, initiating the propagation of electrical signals throughout cells and tissues. The accessory beta subunits participate in localization and functional modulation of the Nav channels. Modulates the activity of SCN1A/Nav1.1. Modulates the activity of SCN2A/Nav1.2. This chain is Sodium channel regulatory subunit beta-4, found in Homo sapiens (Human).